The following is a 1326-amino-acid chain: Probable serine/threonine-protein kinase gdt8 (1326 aa).

An N-terminal signal peptide occupies residues 1–22 (MINKILIKLITIIIFCFSFLFA). Residues 23–782 (EEDLIRTPPG…VDRNENLELK (760 aa)) lie on the Extracellular side of the membrane. Disordered stretches follow at residues 419 to 467 (VDQN…GNQG) and 731 to 762 (EPPT…QTPI). 2 stretches are compositionally biased toward low complexity: residues 422–460 (NNNN…NNNN) and 731–761 (EPPT…TQTP). The helical transmembrane segment at 783-803 (IALPICLSLALLIGIIIMICI) threads the bilayer. Residues 804-1326 (FKKVQSNSKL…TKEDKDLDEN (523 aa)) lie on the Cytoplasmic side of the membrane. The interval 833–858 (IVSQPPTVIEEKPQDNSKPDDQKLIE) is disordered. Basic and acidic residues predominate over residues 841–858 (IEEKPQDNSKPDDQKLIE). A Protein kinase domain is found at 1036–1292 (IKTEQLIASY…FSEISLHLEI (257 aa)). Residues 1042 to 1050 (IASYLPSKV) and Lys1065 each bind ATP. Catalysis depends on Asp1158, which acts as the Proton acceptor. The disordered stretch occupies residues 1301–1326 (MNESEESTSNHNTNSKTKEDKDLDEN). The segment covering 1316 to 1326 (KTKEDKDLDEN) has biased composition (basic and acidic residues).

The protein in the N-terminal section; belongs to the GDT family. It in the C-terminal section; belongs to the protein kinase superfamily. TKL Ser/Thr protein kinase family.

The protein localises to the membrane. The catalysed reaction is L-seryl-[protein] + ATP = O-phospho-L-seryl-[protein] + ADP + H(+). It carries out the reaction L-threonyl-[protein] + ATP = O-phospho-L-threonyl-[protein] + ADP + H(+). In Dictyostelium discoideum (Social amoeba), this protein is Probable serine/threonine-protein kinase gdt8 (gdt8).